The sequence spans 197 residues: LexA repressor (197 aa).

Positions valine 28–isoleucine 47 form a DNA-binding region, H-T-H motif. Catalysis depends on for autocatalytic cleavage activity residues serine 119 and lysine 156.

The protein belongs to the peptidase S24 family. As to quaternary structure, homodimer.

It carries out the reaction Hydrolysis of Ala-|-Gly bond in repressor LexA.. In terms of biological role, represses a number of genes involved in the response to DNA damage (SOS response), including recA and lexA. In the presence of single-stranded DNA, RecA interacts with LexA causing an autocatalytic cleavage which disrupts the DNA-binding part of LexA, leading to derepression of the SOS regulon and eventually DNA repair. This chain is LexA repressor, found in Thermotoga sp. (strain RQ2).